Reading from the N-terminus, the 559-residue chain is Protochlorophyllide-dependent translocon component 52, chloroplastic (559 aa).

Residues 1-55 (MEAALAACALPSLRILNTKPRFRCSFSNPSLPISPNSLITRKSSRFTTAVSSPPS) constitute a chloroplast transit peptide. A disordered region spans residues 44 to 70 (SRFTTAVSSPPSSSAATSTNSPPEPEA). Residues 47–64 (TTAVSSPPSSSAATSTNS) show a composition bias toward low complexity. One can recognise a Rieske domain in the interval 85–195 (WYPVMPICDL…STVQHEIIWF (111 aa)). Cys-127, His-129, Cys-147, and His-150 together coordinate [2Fe-2S] cluster. Positions 248 and 253 each coordinate Fe cation. The Redox-active motif motif lies at 483 to 486 (CSSC). A run of 2 helical transmembrane segments spans residues 493–513 (LNALEVILQIASVAMIGVMAV) and 525–545 (IAVLVAAVLSFAASKWLSHFI).

The cofactor is [2Fe-2S] cluster.

Its subcellular location is the plastid. It localises to the chloroplast inner membrane. The catalysed reaction is protochlorophyllide a + 4 reduced [2Fe-2S]-[ferredoxin] + 2 O2 + 5 H(+) = protochlorophyllide b + 4 oxidized [2Fe-2S]-[ferredoxin] + 3 H2O. Down-regulated by light. In terms of biological role, part of a translocon most abundantly expressed in etiolated plants and involved in the protochlorophyllide-dependent import of the precursor NADPH:protochlorophyllide oxidoreductase A (pPORA). The protein is Protochlorophyllide-dependent translocon component 52, chloroplastic of Arabidopsis thaliana (Mouse-ear cress).